Consider the following 296-residue polypeptide: 4-hydroxybenzoate octaprenyltransferase (296 aa).

8 helical membrane passes run proline 28 to glycine 48, leucine 52 to isoleucine 72, alanine 102 to serine 122, threonine 145 to alanine 167, glycine 174 to valine 196, serine 219 to phenylalanine 239, leucine 241 to tryptophan 261, and phenylalanine 275 to leucine 295.

It belongs to the UbiA prenyltransferase family. Mg(2+) is required as a cofactor.

The protein resides in the cell inner membrane. It carries out the reaction all-trans-octaprenyl diphosphate + 4-hydroxybenzoate = 4-hydroxy-3-(all-trans-octaprenyl)benzoate + diphosphate. Its pathway is cofactor biosynthesis; ubiquinone biosynthesis. Functionally, catalyzes the prenylation of para-hydroxybenzoate (PHB) with an all-trans polyprenyl group. Mediates the second step in the final reaction sequence of ubiquinone-8 (UQ-8) biosynthesis, which is the condensation of the polyisoprenoid side chain with PHB, generating the first membrane-bound Q intermediate 3-octaprenyl-4-hydroxybenzoate. This chain is 4-hydroxybenzoate octaprenyltransferase, found in Pseudomonas putida (strain ATCC 700007 / DSM 6899 / JCM 31910 / BCRC 17059 / LMG 24140 / F1).